The chain runs to 248 residues: tRNA pseudouridine synthase A (248 aa).

The active-site Nucleophile is aspartate 53. Tyrosine 111 is a substrate binding site.

It belongs to the tRNA pseudouridine synthase TruA family. In terms of assembly, homodimer.

The catalysed reaction is uridine(38/39/40) in tRNA = pseudouridine(38/39/40) in tRNA. In terms of biological role, formation of pseudouridine at positions 38, 39 and 40 in the anticodon stem and loop of transfer RNAs. The sequence is that of tRNA pseudouridine synthase A from Streptococcus thermophilus (strain ATCC BAA-491 / LMD-9).